Reading from the N-terminus, the 1037-residue chain is Glycine dehydrogenase (decarboxylating) 1, mitochondrial (1037 aa).

Residues 1–67 (MERARRLAYR…AFGRHQQTRS (67 aa)) constitute a mitochondrion transit peptide. Position 98 is an S-glutathionyl cysteine; transient (C98). S-glutathionyl cysteine is present on residues C402 and C463. K774 carries the N6-(pyridoxal phosphate)lysine modification. C777, C943, and C1022 each carry S-glutathionyl cysteine; transient.

This sequence belongs to the GcvP family. Homodimer. The glycine cleavage system is composed of four proteins: P, T, L and H. Pyridoxal 5'-phosphate is required as a cofactor. In terms of processing, glutathionylated at Cys-98, Cys-777, Cys-943 and Cys-1022 after S-nitrosoglutathione treatment. Post-translationally, S-nitrosylated at unknown positions by nitric oxide. Expressed in leaves. Detected in roots, stems, flowers and siliques.

It localises to the mitochondrion. It carries out the reaction N(6)-[(R)-lipoyl]-L-lysyl-[glycine-cleavage complex H protein] + glycine + H(+) = N(6)-[(R)-S(8)-aminomethyldihydrolipoyl]-L-lysyl-[glycine-cleavage complex H protein] + CO2. With respect to regulation, inhibited by harpin, S-nitrosoglutathione (GSNO), nitric oxide, N-ethylmaleimide and 5,5'-dithiobis-(2-nitrobenzoic acid). Functionally, the glycine decarboxylase (GDC) or glycine cleavage system catalyzes the degradation of glycine. The P protein binds the alpha-amino group of glycine through its pyridoxal phosphate cofactor; CO(2) is released and the remaining methylamine moiety is then transferred to the lipoamide cofactor of the H protein. This is Glycine dehydrogenase (decarboxylating) 1, mitochondrial (GLDP1) from Arabidopsis thaliana (Mouse-ear cress).